The sequence spans 155 residues: Small ribosomal subunit protein uS7 (155 aa).

Belongs to the universal ribosomal protein uS7 family. Part of the 30S ribosomal subunit. Contacts proteins S9 and S11.

One of the primary rRNA binding proteins, it binds directly to 16S rRNA where it nucleates assembly of the head domain of the 30S subunit. Is located at the subunit interface close to the decoding center, probably blocks exit of the E-site tRNA. The sequence is that of Small ribosomal subunit protein uS7 from Mycoplasma genitalium (strain ATCC 33530 / DSM 19775 / NCTC 10195 / G37) (Mycoplasmoides genitalium).